The chain runs to 118 residues: D-dopachrome decarboxylase (118 aa).

Pro-2 bears the N-acetylproline mark.

Belongs to the MIF family. In terms of assembly, homotrimer.

It is found in the cytoplasm. The catalysed reaction is D-dopachrome + H(+) = 5,6-dihydroxyindole + CO2. Its function is as follows. Tautomerization of D-dopachrome with decarboxylation to give 5,6-dihydroxyindole (DHI). The polypeptide is D-dopachrome decarboxylase (ddt) (Xenopus tropicalis (Western clawed frog)).